Reading from the N-terminus, the 394-residue chain is MSEFIAENRGADAITRPNWSAVFSVAFCVACLIIVEFLPVSLLTPMAQDLGISEGVAGQSVTVTAFVAMFASLFITQTIQATDRRYVVILFAVLLTISCLLVSFANSFSLLLIGRACLGLALGGFWAMSASLTMRLVPPRTVPKALSVIFGAVSIALVIAAPLGSFLGELIGWRNVFNAAAVMGVLCIFWIIKSLPSLPGKPSHQKQNTFRLLQRPGVMAGMIAIFMSFAGQFAFFTYIRPVYMNLAGFGVDGLTLVLLSFGIASFIGTSLSSFILKRSVKLALAGAPLILAVSALVLTLCGSDKIVATGVAIIWGLTFALVPVGWSTWSTRSLADQAEKAGSIQVAVIQLANTCGAAIGGYALDNIGLTSPLMLSGTLMLLTALLVTAKVKMK.

The Cytoplasmic portion of the chain corresponds to 1 to 21 (MSEFIAENRGADAITRPNWSA). The helical transmembrane segment at 22–42 (VFSVAFCVACLIIVEFLPVSL) threads the bilayer. The Periplasmic portion of the chain corresponds to 43–54 (LTPMAQDLGISE). A helical transmembrane segment spans residues 55-75 (GVAGQSVTVTAFVAMFASLFI). Residues 76–85 (TQTIQATDRR) lie on the Cytoplasmic side of the membrane. The chain crosses the membrane as a helical span at residues 86-106 (YVVILFAVLLTISCLLVSFAN). Position 107 (S107) is a topological domain, periplasmic. The helical transmembrane segment at 108–128 (FSLLLIGRACLGLALGGFWAM) threads the bilayer. At 129-147 (SASLTMRLVPPRTVPKALS) the chain is on the cytoplasmic side. Residues 148–168 (VIFGAVSIALVIAAPLGSFLG) traverse the membrane as a helical segment. Topologically, residues 169-175 (ELIGWRN) are periplasmic. A helical transmembrane segment spans residues 176 to 196 (VFNAAAVMGVLCIFWIIKSLP). The Cytoplasmic segment spans residues 197–215 (SLPGKPSHQKQNTFRLLQR). A helical transmembrane segment spans residues 216–236 (PGVMAGMIAIFMSFAGQFAFF). Topologically, residues 237 to 255 (TYIRPVYMNLAGFGVDGLT) are periplasmic. A helical membrane pass occupies residues 256 to 276 (LVLLSFGIASFIGTSLSSFIL). At 277 to 281 (KRSVK) the chain is on the cytoplasmic side. The helical transmembrane segment at 282-302 (LALAGAPLILAVSALVLTLCG) threads the bilayer. Residues 303 to 305 (SDK) lie on the Periplasmic side of the membrane. A helical membrane pass occupies residues 306–326 (IVATGVAIIWGLTFALVPVGW). At 327–343 (STWSTRSLADQAEKAGS) the chain is on the cytoplasmic side. The chain crosses the membrane as a helical span at residues 344-364 (IQVAVIQLANTCGAAIGGYAL). Over 365–366 (DN) the chain is Periplasmic. The helical transmembrane segment at 367–387 (IGLTSPLMLSGTLMLLTALLV) threads the bilayer. At 388–394 (TAKVKMK) the chain is on the cytoplasmic side.

The protein belongs to the major facilitator superfamily. DHA1 family. NepI (TC 2.A.1.2.26) subfamily.

The protein localises to the cell inner membrane. It carries out the reaction inosine(in) + H(+)(out) = inosine(out) + H(+)(in). The catalysed reaction is guanosine(in) + H(+)(out) = guanosine(out) + H(+)(in). Involved in the efflux of purine ribonucleosides, such as inosine and guanosine. The protein is Purine ribonucleoside efflux pump NepI of Shigella dysenteriae serotype 1 (strain Sd197).